We begin with the raw amino-acid sequence, 398 residues long: 2-amino-3-ketobutyrate coenzyme A ligase (398 aa).

111 to 112 (CF) lines the pyridoxal 5'-phosphate pocket. H136 lines the substrate pocket. Pyridoxal 5'-phosphate-binding positions include S185, 210 to 213 (DDSH), 241 to 244 (TLGK), and 274 to 275 (SN). At K244 the chain carries N6-(pyridoxal phosphate)lysine. Substrate is bound at residue R368.

Belongs to the class-II pyridoxal-phosphate-dependent aminotransferase family. As to quaternary structure, homodimer. The cofactor is pyridoxal 5'-phosphate.

It carries out the reaction glycine + acetyl-CoA = (2S)-2-amino-3-oxobutanoate + CoA. It participates in amino-acid degradation; L-threonine degradation via oxydo-reductase pathway; glycine from L-threonine: step 2/2. Catalyzes the cleavage of 2-amino-3-ketobutyrate to glycine and acetyl-CoA. In Escherichia coli (strain K12), this protein is 2-amino-3-ketobutyrate coenzyme A ligase.